A 515-amino-acid chain; its full sequence is Portal protein (515 aa).

It belongs to the podoviridae head-to-tail connector protein family. As to quaternary structure, homododecamer.

The protein resides in the virion. Functionally, forms the portal vertex of the capsid. This portal plays critical roles in head assembly, genome packaging, neck/tail attachment, and genome ejection. The portal protein multimerizes as a single ring-shaped homododecamer arranged around a central channel. This Salmonella typhimurium (Bacteriophage SP6) protein is Portal protein.